Reading from the N-terminus, the 404-residue chain is MFKGKVVVAQGGGPTAVINQSMVGAVLESRKFRNVELVYGAVHGVRGIVDEHFLDLTQETTHNLEMVAETPSSALGSTREKPDLKYCQEIFKVLKAHEIGYFFYIGGNDSSDTVRIVSEEAAKADYGLRCIHIPKTIDNDLVVNDHTPGFPSAARFVAQAFSGVNLDNQALPGVYIGVVMGRHAGFLTAASALGKKFQDDGPHLIYLPERTFDVDTFVSDVKEVYDRTGRCIVAVSEGIHDASGEPIITKLAEEVERDAHGNVQLSGTGALADLLVSVVKKKSGIKRVRGDTLGYLQRSFVGCVSDVDQREAREVGEKAVQYAMWGQTNGSVTIHRTGFYSVDYQLTPLLDVAGKTRTMPDSFIAANGHDVTTDFLMYLRPLLGRGMPDAYRLRDNRVAKVLNR.

Gly-13 is a binding site for diphosphate. Asn-108 is a Mg(2+) binding site. Substrate-binding positions include 136–138 (TID), 180–182 (MGR), Glu-237, and 295–298 (YLQR). Asp-138 (proton acceptor) is an active-site residue.

It belongs to the phosphofructokinase type A (PFKA) family. PPi-dependent PFK group II subfamily. Clade 'B2' sub-subfamily. As to quaternary structure, homodimer. Mg(2+) is required as a cofactor.

It localises to the cytoplasm. It carries out the reaction beta-D-fructose 6-phosphate + diphosphate = beta-D-fructose 1,6-bisphosphate + phosphate + H(+). It functions in the pathway carbohydrate degradation; glycolysis; D-glyceraldehyde 3-phosphate and glycerone phosphate from D-glucose: step 3/4. With respect to regulation, non-allosteric. Catalyzes the phosphorylation of D-fructose 6-phosphate, the first committing step of glycolysis. Uses inorganic phosphate (PPi) as phosphoryl donor instead of ATP like common ATP-dependent phosphofructokinases (ATP-PFKs), which renders the reaction reversible, and can thus function both in glycolysis and gluconeogenesis. Consistently, PPi-PFK can replace the enzymes of both the forward (ATP-PFK) and reverse (fructose-bisphosphatase (FBPase)) reactions. The chain is Pyrophosphate--fructose 6-phosphate 1-phosphotransferase from Rhodospirillum rubrum (strain ATCC 11170 / ATH 1.1.1 / DSM 467 / LMG 4362 / NCIMB 8255 / S1).